Here is an 85-residue protein sequence, read N- to C-terminus: Conotoxin Lt28.4 (85 aa).

The N-terminal stretch at 1–21 (MPKLEMMLLVLLILPLCYIDA) is a signal peptide. Positions 22-40 (VGPPPPWNMEDEIIEHWQK) are excised as a propeptide.

The protein belongs to the conotoxin D superfamily. Contains 5 disulfide bonds. As to expression, expressed by the venom duct.

The protein resides in the secreted. Probable neurotoxin. The protein is Conotoxin Lt28.4 of Conus litteratus (Lettered cone).